We begin with the raw amino-acid sequence, 197 residues long: dITP/XTP pyrophosphatase (197 aa).

7 to 12 (TGNEQK) is a binding site for substrate. 2 residues coordinate Mg(2+): Glu44 and Asp73. Catalysis depends on Asp73, which acts as the Proton acceptor. Substrate contacts are provided by residues Thr74, 156–159 (FGYD), Lys179, and 184–185 (HR).

It belongs to the HAM1 NTPase family. As to quaternary structure, homodimer. The cofactor is Mg(2+).

The enzyme catalyses XTP + H2O = XMP + diphosphate + H(+). The catalysed reaction is dITP + H2O = dIMP + diphosphate + H(+). It carries out the reaction ITP + H2O = IMP + diphosphate + H(+). Its function is as follows. Pyrophosphatase that catalyzes the hydrolysis of nucleoside triphosphates to their monophosphate derivatives, with a high preference for the non-canonical purine nucleotides XTP (xanthosine triphosphate), dITP (deoxyinosine triphosphate) and ITP. Seems to function as a house-cleaning enzyme that removes non-canonical purine nucleotides from the nucleotide pool, thus preventing their incorporation into DNA/RNA and avoiding chromosomal lesions. This Elusimicrobium minutum (strain Pei191) protein is dITP/XTP pyrophosphatase.